A 519-amino-acid polypeptide reads, in one-letter code: Cytochrome P450 52A12 (519 aa).

Residue C467 coordinates heme.

It belongs to the cytochrome P450 family. Requires heme as cofactor.

It is found in the membrane. In terms of biological role, together with an NADPH cytochrome P450 the enzyme system catalyzes the terminal hydroxylation as the first step in the assimilation of alkanes and fatty acids. This chain is Cytochrome P450 52A12 (CYP52A12), found in Debaryomyces hansenii (Yeast).